Here is a 473-residue protein sequence, read N- to C-terminus: MRAGLGPIITLALVLEVAWAGELKPTAPPIFTGRPFVVAWNVPTQECAPRHKVPLDLRAFDVKATPNEGFFNQNITTFYYDRLGLYPRFDAAGTSVHGGVPQNGSLCAHLPMLKESVERYIQTQEPGGLAVIDWEEWRPVWVRNWQEKDVYRQSSRQLVASRHPDWPSDRVMKQAQYEFEFAARQFMLNTLRYVKAVRPQHLWGFYLFPDCYNHDYVQNWESYTGRCPDVEVARNDQLAWLWAESTALFPSVYLDETLASSVHSRNFVSFRVREALRVAHTHHANHALPVYVFTRPTYTRGLTGLSQVDLISTIGESAALGSAGVIFWGDSEDASSMETCQYLKNYLTQLLVPYIVNVSWATQYCSWTQCHGHGRCVRRNPSANTFLHLNASSFRLVPGHTPSEPQLRPEGQLSEADLNYLQKHFRCQCYLGWGGEQCQRNYKGAAGNASRAWAGSHLTSLLGLVAVALTWTL.

A signal peptide spans Met-1 to Ala-20. Cystine bridges form between Cys-47/Cys-340 and Cys-211/Cys-227. N-linked (GlcNAc...) asparagine glycans are attached at residues Asn-74 and Asn-103. Residue Glu-135 is the Proton donor of the active site. Asn-357 is a glycosylation site (N-linked (GlcNAc...) asparagine). The 79-residue stretch at Ala-361–Gln-439 folds into the EGF-like domain. 3 disulfides stabilise this stretch: Cys-365/Cys-376, Cys-370/Cys-427, and Cys-429/Cys-438. Residue Asn-390 is glycosylated (N-linked (GlcNAc...) asparagine). Asn-448 carries GPI-anchor amidated asparagine; alternate lipidation. Residue Asn-448 is glycosylated (N-linked (GlcNAc...) asparagine; alternate). The propeptide at Ala-449–Leu-473 is removed in mature form.

This sequence belongs to the glycosyl hydrolase 56 family. As to quaternary structure, interacts with MST1R. As to expression, widely expressed, with highest expression levels in kidney, lung and liver (at protein level).

The protein localises to the cell membrane. The catalysed reaction is Random hydrolysis of (1-&gt;4)-linkages between N-acetyl-beta-D-glucosamine and D-glucuronate residues in hyaluronate.. Functionally, catalyzes hyaluronan degradation into small fragments that are endocytosed and degraded in lysosomes by HYAL1 and exoglycosidases. Essential for the breakdown of extracellular matrix hyaluronan. The sequence is that of Hyaluronidase-2 (Hyal2) from Mus musculus (Mouse).